We begin with the raw amino-acid sequence, 366 residues long: Chorismate synthase (366 aa).

Arg48 is an NADP(+) binding site. Residues 131–133 (RAS), 243–244 (NA), Gly288, 303–307 (KPTSS), and Arg329 each bind FMN.

The protein belongs to the chorismate synthase family. Homotetramer. FMNH2 serves as cofactor.

The catalysed reaction is 5-O-(1-carboxyvinyl)-3-phosphoshikimate = chorismate + phosphate. The protein operates within metabolic intermediate biosynthesis; chorismate biosynthesis; chorismate from D-erythrose 4-phosphate and phosphoenolpyruvate: step 7/7. In terms of biological role, catalyzes the anti-1,4-elimination of the C-3 phosphate and the C-6 proR hydrogen from 5-enolpyruvylshikimate-3-phosphate (EPSP) to yield chorismate, which is the branch point compound that serves as the starting substrate for the three terminal pathways of aromatic amino acid biosynthesis. This reaction introduces a second double bond into the aromatic ring system. In Bartonella henselae (strain ATCC 49882 / DSM 28221 / CCUG 30454 / Houston 1) (Rochalimaea henselae), this protein is Chorismate synthase.